We begin with the raw amino-acid sequence, 190 residues long: Elongation factor P-like protein (190 aa).

It belongs to the elongation factor P family.

The polypeptide is Elongation factor P-like protein (Yersinia pestis bv. Antiqua (strain Antiqua)).